A 445-amino-acid polypeptide reads, in one-letter code: Argininosuccinate synthase (445 aa).

Residues 17-25 (AFSGGLDTS) and alanine 43 each bind ATP. Tyrosine 99 is an L-citrulline binding site. The ATP site is built by glycine 129 and threonine 131. L-aspartate-binding residues include threonine 131, asparagine 135, and aspartate 136. Asparagine 135 contacts L-citrulline. Residue aspartate 136 coordinates ATP. 2 residues coordinate L-citrulline: arginine 139 and serine 192. Residue aspartate 194 coordinates ATP. Residues threonine 201, glutamate 203, and glutamate 280 each coordinate L-citrulline.

The protein belongs to the argininosuccinate synthase family. Type 2 subfamily. Homotetramer.

The protein localises to the cytoplasm. It catalyses the reaction L-citrulline + L-aspartate + ATP = 2-(N(omega)-L-arginino)succinate + AMP + diphosphate + H(+). It participates in amino-acid biosynthesis; L-arginine biosynthesis; L-arginine from L-ornithine and carbamoyl phosphate: step 2/3. The sequence is that of Argininosuccinate synthase from Rhodopseudomonas palustris (strain BisB5).